The primary structure comprises 236 residues: Large ribosomal subunit protein uL1 (236 aa).

Belongs to the universal ribosomal protein uL1 family. As to quaternary structure, part of the 50S ribosomal subunit.

Functionally, binds directly to 23S rRNA. The L1 stalk is quite mobile in the ribosome, and is involved in E site tRNA release. Its function is as follows. Protein L1 is also a translational repressor protein, it controls the translation of the L11 operon by binding to its mRNA. In Kocuria rhizophila (strain ATCC 9341 / DSM 348 / NBRC 103217 / DC2201), this protein is Large ribosomal subunit protein uL1.